Consider the following 431-residue polypeptide: Asparagine--tRNA ligase (431 aa).

This sequence belongs to the class-II aminoacyl-tRNA synthetase family.

The protein resides in the cytoplasm. It catalyses the reaction tRNA(Asn) + L-asparagine + ATP = L-asparaginyl-tRNA(Asn) + AMP + diphosphate + H(+). This Thermococcus kodakarensis (strain ATCC BAA-918 / JCM 12380 / KOD1) (Pyrococcus kodakaraensis (strain KOD1)) protein is Asparagine--tRNA ligase.